Consider the following 225-residue polypeptide: MMYHIPGVLSPQDVARFREQLEQAEWVDGRVTTGAQGAQVKNNQQVDTRSALYAALQNEVLNAVNQHALFFAAALPRTLSTPLFNRYQNNETYGFHVDGAVRSHPQNGWMRTDLSATLFLSDPESYDGGELVVNDTFGQHRVKLPAGDLVLYPSSSLHCVTPVTRGVRVASFMWIQSMIRDDKKRAMLFELDNNIQSLKSRYGESEEILSLLNLYHNLLREWSEI.

The 100-residue stretch at 78–177 folds into the Fe2OG dioxygenase domain; the sequence is TLSTPLFNRY…RVASFMWIQS (100 aa). 3 residues coordinate Fe cation: histidine 96, aspartate 98, and histidine 158. Arginine 168 lines the 2-oxoglutarate pocket.

Fe(2+) serves as cofactor. L-ascorbate is required as a cofactor.

The protein is PKHD-type hydroxylase YbiX of Escherichia coli O45:K1 (strain S88 / ExPEC).